Consider the following 695-residue polypeptide: MKNDIKKVRNIGISAHIDSGKTTLTERILFYTKRIHAMHDVKGKDGVGATMDSMELERERGITISSAATFCTWGDHEVNIIDTPGHVDFTIEVERALRVLDGAILVLCAVGGVQSQSITVDAQMKRYKVPCVAFVNKCDRSGANPARVVEQLKTRLGHNALLMQLPIGLEADFQGIVDLISMKAVYFDGAGGELLRTEAVPESLLPEAISRREELIDSVSLFSDSLTEAILEGTEISEVMIMEAVRQGTLERKITPVFIGSAYKNKGIQPLLDAVTRYLPCPADIENSALDLSREEAPVQLTSNTEDPVVALAFKLEDGIYGQLTYIRVYQGILSRGATVVNARDGKKVRIGRLVRMHADQMEDIEAIHAGYIGALFGLECQSGDTFAAQGLNLAMTSMFVPEPVISLAIVPKDKKSMVNMSKALNRFTKEDPTFRTHLDPETSETIIEGMGELHLDIYVERIRREYNAEVTTGNPRVAYRETITQKAAFNYTHRKQTGGSGQYGRVAGYIEPLSDEDFLFENKITGGAIPTQFIPACEKGFRMSMAKGPKMEFPVTGVKVVIDDGAFHAVDSSDMAFQAAARGAFREAYNKAKPVILEPIMKVVVETPNEFQGAVMGLLNQRRGMIVGTQDEGQTCVIEAQTPLAEMFGFSTVIRSATQGKAQFTMEFSAYRQVPQSIAEKITEEVAKRKKSAA.

The tr-type G domain occupies 6 to 284 (KKVRNIGISA…VTRYLPCPAD (279 aa)). GTP contacts are provided by residues 15–22 (AHIDSGKT), 82–86 (DTPGH), and 136–139 (NKCD).

This sequence belongs to the TRAFAC class translation factor GTPase superfamily. Classic translation factor GTPase family. EF-G/EF-2 subfamily.

The protein resides in the cytoplasm. Functionally, catalyzes the GTP-dependent ribosomal translocation step during translation elongation. During this step, the ribosome changes from the pre-translocational (PRE) to the post-translocational (POST) state as the newly formed A-site-bound peptidyl-tRNA and P-site-bound deacylated tRNA move to the P and E sites, respectively. Catalyzes the coordinated movement of the two tRNA molecules, the mRNA and conformational changes in the ribosome. The sequence is that of Elongation factor G 1 from Syntrophus aciditrophicus (strain SB).